A 162-amino-acid chain; its full sequence is Transmembrane protein 92 (162 aa).

Residues 1–22 (MLDTWVWGTLTLTFGLLSSLQG) form the signal peptide. Over 23-63 (VSFNETANTCDILNCPKGFTCCVKECCPERKVWDPANDRFR) the chain is Extracellular. The helical transmembrane segment at 64–84 (FLVILACIIFPILFICALVSL) threads the bilayer. Residues 85–162 (FCPNCTELQH…QMRGRAYATL (78 aa)) lie on the Cytoplasmic side of the membrane. The interval 134–162 (TPPTEPPPPYSLRPEGPAGQMRGRAYATL) is disordered.

Its subcellular location is the membrane. The protein is Transmembrane protein 92 (Tmem92) of Mus musculus (Mouse).